The sequence spans 340 residues: Ketol-acid reductoisomerase (NADP(+)) (340 aa).

Residues 3 to 183 (INVYYDKDCD…GGGRTGIIET (181 aa)) enclose the KARI N-terminal Rossmann domain. NADP(+) contacts are provided by residues 26–29 (FGSQ), serine 54, and 84–87 (DELQ). Histidine 109 is an active-site residue. Glycine 135 lines the NADP(+) pocket. Residues 184 to 329 (TFKDETETDL…KKLRAMMPWI (146 aa)) enclose the KARI C-terminal knotted domain. Mg(2+)-binding residues include aspartate 192, glutamate 196, glutamate 228, and glutamate 232. Serine 253 contacts substrate.

The protein belongs to the ketol-acid reductoisomerase family. The cofactor is Mg(2+).

It carries out the reaction (2R)-2,3-dihydroxy-3-methylbutanoate + NADP(+) = (2S)-2-acetolactate + NADPH + H(+). The catalysed reaction is (2R,3R)-2,3-dihydroxy-3-methylpentanoate + NADP(+) = (S)-2-ethyl-2-hydroxy-3-oxobutanoate + NADPH + H(+). It functions in the pathway amino-acid biosynthesis; L-isoleucine biosynthesis; L-isoleucine from 2-oxobutanoate: step 2/4. It participates in amino-acid biosynthesis; L-valine biosynthesis; L-valine from pyruvate: step 2/4. Functionally, involved in the biosynthesis of branched-chain amino acids (BCAA). Catalyzes an alkyl-migration followed by a ketol-acid reduction of (S)-2-acetolactate (S2AL) to yield (R)-2,3-dihydroxy-isovalerate. In the isomerase reaction, S2AL is rearranged via a Mg-dependent methyl migration to produce 3-hydroxy-3-methyl-2-ketobutyrate (HMKB). In the reductase reaction, this 2-ketoacid undergoes a metal-dependent reduction by NADPH to yield (R)-2,3-dihydroxy-isovalerate. This Campylobacter concisus (strain 13826) protein is Ketol-acid reductoisomerase (NADP(+)).